A 501-amino-acid chain; its full sequence is Phenylalanine--tRNA ligase alpha subunit (501 aa).

L-phenylalanine-binding residues include Thr-340 and Phe-423. A Mg(2+)-binding site is contributed by Glu-425. Phe-448 contacts L-phenylalanine.

The protein belongs to the class-II aminoacyl-tRNA synthetase family. Phe-tRNA synthetase alpha subunit type 2 subfamily. As to quaternary structure, tetramer of two alpha and two beta subunits. Mg(2+) serves as cofactor.

It localises to the cytoplasm. The enzyme catalyses tRNA(Phe) + L-phenylalanine + ATP = L-phenylalanyl-tRNA(Phe) + AMP + diphosphate + H(+). The polypeptide is Phenylalanine--tRNA ligase alpha subunit (Methanococcus maripaludis (strain C7 / ATCC BAA-1331)).